Reading from the N-terminus, the 606-residue chain is Vitamin B12 transporter BtuB (606 aa).

The signal sequence occupies residues 1–22 (MQKSLLAIAMASLLTPVSYLHA). Residues 29–36 (DTVVVTAN) carry the TonB box motif. Residues 41–153 (PLAEVIASTT…IAGVINVITT (113 aa)) form the TBDR plug domain. The region spanning 158 to 606 (SEGSVVSLGA…RYFANLTYQF (449 aa)) is the TBDR beta-barrel domain. Positions 589–606 (LSYNAPERRYFANLTYQF) match the TonB C-terminal box motif.

The protein belongs to the TonB-dependent receptor family. BtuB (TC 1.B.14.3.1) subfamily.

It is found in the cell outer membrane. Involved in the active translocation of vitamin B12 (cyanocobalamin) across the outer membrane to the periplasmic space. It derives its energy for transport by interacting with the trans-periplasmic membrane protein TonB. In Vibrio vulnificus (strain CMCP6), this protein is Vitamin B12 transporter BtuB.